A 109-amino-acid polypeptide reads, in one-letter code: Small ribosomal subunit protein uS17 (109 aa).

Belongs to the universal ribosomal protein uS17 family. Part of the 30S ribosomal subunit.

Its function is as follows. One of the primary rRNA binding proteins, it binds specifically to the 5'-end of 16S ribosomal RNA. This Methanococcus vannielii protein is Small ribosomal subunit protein uS17.